Reading from the N-terminus, the 549-residue chain is Glucose-6-phosphate isomerase (549 aa).

The active-site Proton donor is Glu353. Catalysis depends on residues His384 and Lys510.

The protein belongs to the GPI family.

Its subcellular location is the cytoplasm. It carries out the reaction alpha-D-glucose 6-phosphate = beta-D-fructose 6-phosphate. Its pathway is carbohydrate biosynthesis; gluconeogenesis. It participates in carbohydrate degradation; glycolysis; D-glyceraldehyde 3-phosphate and glycerone phosphate from D-glucose: step 2/4. Functionally, catalyzes the reversible isomerization of glucose-6-phosphate to fructose-6-phosphate. The polypeptide is Glucose-6-phosphate isomerase (Mycolicibacterium smegmatis (strain ATCC 700084 / mc(2)155) (Mycobacterium smegmatis)).